The following is a 375-amino-acid chain: tRNA-specific 2-thiouridylase MnmA (375 aa).

Residues 12 to 19 and M38 contribute to the ATP site; that span reads GMSGGVDS. The interaction with target base in tRNA stretch occupies residues 98 to 100; it reads NPD. C103 functions as the Nucleophile in the catalytic mechanism. C103 and C200 form a disulfide bridge. Position 127 (G127) interacts with ATP. The tract at residues 150–152 is interaction with tRNA; sequence KDQ. The active-site Cysteine persulfide intermediate is the C200. An interaction with tRNA region spans residues 312 to 313; that stretch reads RY.

The protein belongs to the MnmA/TRMU family.

The protein localises to the cytoplasm. The enzyme catalyses S-sulfanyl-L-cysteinyl-[protein] + uridine(34) in tRNA + AH2 + ATP = 2-thiouridine(34) in tRNA + L-cysteinyl-[protein] + A + AMP + diphosphate + H(+). Functionally, catalyzes the 2-thiolation of uridine at the wobble position (U34) of tRNA, leading to the formation of s(2)U34. The protein is tRNA-specific 2-thiouridylase MnmA of Lactobacillus johnsonii (strain CNCM I-12250 / La1 / NCC 533).